Here is a 181-residue protein sequence, read N- to C-terminus: Adenine phosphoribosyltransferase (181 aa).

Belongs to the purine/pyrimidine phosphoribosyltransferase family. As to quaternary structure, homodimer.

The protein localises to the cytoplasm. It carries out the reaction AMP + diphosphate = 5-phospho-alpha-D-ribose 1-diphosphate + adenine. It participates in purine metabolism; AMP biosynthesis via salvage pathway; AMP from adenine: step 1/1. Its function is as follows. Catalyzes a salvage reaction resulting in the formation of AMP, that is energically less costly than de novo synthesis. This is Adenine phosphoribosyltransferase from Brucella suis (strain ATCC 23445 / NCTC 10510).